A 66-amino-acid chain; its full sequence is Cytochrome b-c1 complex subunit 9, mitochondrial (66 aa).

Topologically, residues Ser2 to Phe17 are mitochondrial matrix. The chain crosses the membrane as a helical span at residues Val18–His43. Residues Asn44–Glu66 are Mitochondrial intermembrane-facing.

Belongs to the UQCR10/QCR9 family. In terms of assembly, component of the ubiquinol-cytochrome c oxidoreductase (cytochrome b-c1 complex, complex III, CIII), a multisubunit enzyme composed of 10 subunits. The complex is composed of 3 respiratory subunits cytochrome b (COB), cytochrome c1 (CYT1) and Rieske protein (RIP1), 2 core protein subunits COR1 and QCR2, and 5 low-molecular weight protein subunits QCR6, QCR7, QCR8, QCR9 and QCR10. The complex exists as an obligatory dimer and forms supercomplexes (SCs) in the inner mitochondrial membrane with a monomer or a dimer of cytochrome c oxidase (complex IV, CIV), resulting in 2 different assemblies (supercomplexes III(2)IV and III(2)IV(2)). Interacts with the transmembrane segment of RIP1.

The protein resides in the mitochondrion inner membrane. Component of the ubiquinol-cytochrome c oxidoreductase, a multisubunit transmembrane complex that is part of the mitochondrial electron transport chain which drives oxidative phosphorylation. The respiratory chain contains 3 multisubunit complexes succinate dehydrogenase (complex II, CII), ubiquinol-cytochrome c oxidoreductase (cytochrome b-c1 complex, complex III, CIII) and cytochrome c oxidase (complex IV, CIV), that cooperate to transfer electrons derived from NADH and succinate to molecular oxygen, creating an electrochemical gradient over the inner membrane that drives transmembrane transport and the ATP synthase. The cytochrome b-c1 complex catalyzes electron transfer from ubiquinol to cytochrome c, linking this redox reaction to translocation of protons across the mitochondrial inner membrane, with protons being carried across the membrane as hydrogens on the quinol. In the process called Q cycle, 2 protons are consumed from the matrix, 4 protons are released into the intermembrane space and 2 electrons are passed to cytochrome c. The polypeptide is Cytochrome b-c1 complex subunit 9, mitochondrial (QCR9) (Saccharomyces cerevisiae (strain ATCC 204508 / S288c) (Baker's yeast)).